A 445-amino-acid chain; its full sequence is Probable glycine dehydrogenase (decarboxylating) subunit 1 (445 aa).

It belongs to the GcvP family. N-terminal subunit subfamily. The glycine cleavage system is composed of four proteins: P, T, L and H. In this organism, the P 'protein' is a heterodimer of two subunits.

The enzyme catalyses N(6)-[(R)-lipoyl]-L-lysyl-[glycine-cleavage complex H protein] + glycine + H(+) = N(6)-[(R)-S(8)-aminomethyldihydrolipoyl]-L-lysyl-[glycine-cleavage complex H protein] + CO2. The glycine cleavage system catalyzes the degradation of glycine. The P protein binds the alpha-amino group of glycine through its pyridoxal phosphate cofactor; CO(2) is released and the remaining methylamine moiety is then transferred to the lipoamide cofactor of the H protein. The protein is Probable glycine dehydrogenase (decarboxylating) subunit 1 of Anaeromyxobacter dehalogenans (strain 2CP-C).